The chain runs to 80 residues: Small ribosomal subunit protein bS18 (80 aa).

The protein belongs to the bacterial ribosomal protein bS18 family. Part of the 30S ribosomal subunit. Forms a tight heterodimer with protein bS6.

Binds as a heterodimer with protein bS6 to the central domain of the 16S rRNA, where it helps stabilize the platform of the 30S subunit. This chain is Small ribosomal subunit protein bS18, found in Staphylococcus saprophyticus subsp. saprophyticus (strain ATCC 15305 / DSM 20229 / NCIMB 8711 / NCTC 7292 / S-41).